The primary structure comprises 1141 residues: MINRDNKKAITKKGMISNRLNKFSIRKYTVGTASILVGTTLIFGLGNQEAKAAENTSTENAKQDDATTSDNKEVVSETENNSTTENDSTNPIKKETNTDSQPEAKEESTTSSTQQQQNNVTATTETKPQNIEKENVKPSTDKTATEDTSVILEEKKAPNYTNNDVTTKPSTSEIQTKPTTPQESTNIENSQPQPTPSKVDNQVTDATNPKEPVNVSKEELKNNPEKLKELVRNDNNTDRSTKPVATAPTSVAPKRLNAKMRFAVAQPAAVASNNVNDLITVTKQTIKVGDGKDNVAAAHDGKDIEYDTEFTIDNKVKKGDTMTINYDKNVIPSDLTDKNDPIDITDPSGEVIAKGTFDKATKQITYTFTDYVDKYEDIKARLTLYSYIDKQAVPNETSLNLTFATAGKETSQNVSVDYQDPMVHGDSNIQSIFTKLDENKQTIEQQIYVNPLKKTATNTKVDIAGSQVDDYGNIKLGNGSTIIDQNTEIKVYKVNPNQQLPQSNRIYDFSQYEDVTSQFDNKKSFSNNVATLDFGDINSAYIIKVVSKYTPTSDGELDIAQGTSMRTTDKYGYYNYAGYSNFIVTSNDTGGGDGTVKPEEKLYKIGDYVWEDVDKDGVQGTDSKEKPMANVLVTLTYPDGTTKSVRTDANGHYEFGGLKDGETYTVKFETPAGYLPTKVNGTTDGEKDSNGSSITVKINGKDDMSLDTGFYKEPKYNLGDYVWEDTNKDGIQDANEPGIKDVKVTLKDSTGKVIGTTTTDASGKYKFTDLDNGNYTVEFETPAGYTPTVKNTTAEDKDSNGLTTTGVIKDADNMTLDSGFYKTPKYSLGDYVWYDSNKDGKQDSTEKGIKDVKVTLLNEKGEVIGTTKTDENGKYRFDNLDSGKYKVIFEKPAGLTQTVTNTTEDDKDADGGEVDVTITDHDDFILDNGYFEEDTSDSDSDSDSDSDSDSDSDSDSDSDSDSDSDSDSDSDSDSDSDSDSDSDSDSDSDSDSDSDSDSDSDSDSDSDSDSDSDSDSDSDSDSDSDSDSDSDSDSDSDSDSDSDSDSDSDSDSDSDSDSDSDSDSDSDSDSDSDSDSDSDSDAGKHTPVKPMSTTKDHHNKAKALPETGSENNGSNNATLFGGLFAALGSLLLFGRRKKQNK.

The N-terminal stretch at 1 to 52 (MINRDNKKAITKKGMISNRLNKFSIRKYTVGTASILVGTTLIFGLGNQEAKA) is a signal peptide. The YSIRK-G/S signaling motif signature appears at 23-34 (FSIRKYTVGTAS). The tract at residues 53–601 (AENTSTENAK…GDGTVKPEEK (549 aa)) is ligand binding A region. Positions 54–248 (ENTSTENAKQ…RSTKPVATAP (195 aa)) are disordered. Over residues 61-75 (AKQDDATTSDNKEVV) the composition is skewed to basic and acidic residues. The span at 77 to 90 (ETENNSTTENDSTN) shows a compositional bias: low complexity. A compositionally biased stretch (basic and acidic residues) spans 92 to 108 (IKKETNTDSQPEAKEES). Residues 109-126 (TTSSTQQQQNNVTATTET) are compositionally biased toward low complexity. Residues 130–145 (NIEKENVKPSTDKTAT) show a composition bias toward basic and acidic residues. The span at 159-207 (NYTNNDVTTKPSTSEIQTKPTTPQESTNIENSQPQPTPSKVDNQVTDAT) shows a compositional bias: polar residues. Basic and acidic residues predominate over residues 216–241 (SKEELKNNPEKLKELVRNDNNTDRST). 3 consecutive CNA-B domains span residues 602-714 (LYKI…YKEP), 715-824 (KYNL…YKTP), and 825-935 (KYSL…EEDT). The interval 929–1117 (GYFEEDTSDS…GSENNGSNNA (189 aa)) is disordered. Residues 930–1080 (YFEEDTSDSD…DSDSDSDSDS (151 aa)) show a composition bias toward acidic residues. Residues 1104–1108 (LPETG) carry the LPXTG sorting signal motif. Pentaglycyl murein peptidoglycan amidated threonine is present on Thr1107. A propeptide spans 1108 to 1141 (GSENNGSNNATLFGGLFAALGSLLLFGRRKKQNK) (removed by sortase).

This sequence belongs to the serine-aspartate repeat-containing protein (SDr) family. In terms of assembly, interacts with host complement factor H/CFAH (via C-terminus). Interacts with host complement regulator C4BPA.

It localises to the secreted. Its subcellular location is the cell wall. Cell surface-associated calcium-binding protein which plays an important role in adhesion and pathogenesis. Contributes to the resistance to killing by innate immune components in blood and thus attenuates bacterial clearance by interacting with host complement factor H/CFAH and modulating its activity. Inhibits also bacterial opsonization and killing by interacting with host complement regulator C4BPA and thus inhibiting classical complement pathway activation. The sequence is that of Serine-aspartate repeat-containing protein E (sdrE) from Staphylococcus aureus (strain Mu50 / ATCC 700699).